Consider the following 332-residue polypeptide: MLQAIGWPWPGPPADAAWQAMCAVYSQCRPARVIEQHRSGYVVAEAPEVPIKVESLPAWQRRGFPPHERAVVGDWVLLDGRRIVALLPRRTVIKRLAAGKHYRQQLIAANLDTAFIVCGLDGDFNPRRIERYCVLIASGGVEPVVVLTKVDLCVDVGAAVAVLREHFSQALAVVAVDARKAEPVVALYPWLLPGRTVALLGSSGAGKSTLTNTLLGEQRMKVGEVRQRDSRGRHTTTHRALLPLPSGACLIDTPGMRELKFTGEEDLVEEFADIELLATQCRFRDCAHQVEPGCAVRAAIGCGTLDPQRLHHYFKLRGEIVGAADRSMLRRY.

The CP-type G domain maps to 103 to 259 (RQQLIAANLD…LIDTPGMREL (157 aa)). GTP-binding positions include 148 to 151 (TKVD) and 201 to 209 (GSSGAGKST). Zn(2+) is bound by residues Cys281, Cys286, His288, and Cys294.

Belongs to the TRAFAC class YlqF/YawG GTPase family. RsgA subfamily. Monomer. Associates with 30S ribosomal subunit, binds 16S rRNA. Requires Zn(2+) as cofactor.

Its subcellular location is the cytoplasm. Functionally, one of several proteins that assist in the late maturation steps of the functional core of the 30S ribosomal subunit. Helps release RbfA from mature subunits. May play a role in the assembly of ribosomal proteins into the subunit. Circularly permuted GTPase that catalyzes slow GTP hydrolysis, GTPase activity is stimulated by the 30S ribosomal subunit. This Xylella fastidiosa (strain M12) protein is Small ribosomal subunit biogenesis GTPase RsgA.